Reading from the N-terminus, the 889-residue chain is MADTTVEKLATEVGKSVERLIEQFSQAGIKKGQTDNVSEAEKQQLLDYLKKQHGGESAPTKMTLQRKTVSTLSVAGNGGQSKDVKVEVRKTRTFVKRDVSEAVLKAEEEAKAKAEAEAQAKAEAEAKARAEAEAKAKADAEAKAEAKAKADAEAKAKAKAATDAKTTKDTSPEAEAARVEAERLKAAQAEATKRKQDEEAAKAAEKARLLAEENSKRWDEEERQRKEAERYSDHHITTSKVARAAEDSSDMDEEKRGRRARNKNTAKTKRGGKDARDGREKHMRNRSTAPESMAHGFNKPVAAVTRDVRIGETVTVAELAHLMAVKATEIIKQMMKMGSMVTINQVLDQETAQLVAEEMGHKVVLIRENELEQQVLSERDEEGGVKLEPRAPVVTIMGHVDHGKTSLLDYIRRAKVAAGEAGGITQHIGAYHVETENGMITFLDTPGHAAFTAMRARGAKATDIVVLVVAADDGVMPQTIEAIQHAKAGNVPLIVAVNKMDKPEADIDRVKSELAQHGVMSEDWGGDNMFAFVSAKTGAGVDDLLEGILLQAEVLELKAVRDGMAAGVVIESQLDKGRGPVATILVQEGTLRQGDIVLCGLEYGKIRAMKDENGRSITEAGPSIPVEILGLSGVPSAGDEATVVRDERKAREVALYRQGKFRDVKLARQQKSKLENMFANMTEGEVKELNIVLKADVQGSLEAITDSLMGLSTDEVKVNIIARGVGALTETDATLAAASNAIMVGFNVRADAQARKTIESESVDLRYYSVIYNLIDEVKAAMTGMLSPEFKQQIIGLAEVRDVFKSPKLGAIAGCMVTEGTIKRSAPIRVLRDNVVIFEGELESLRRFKDDVNEVRNGMECGIGVKNYNDVRVGDQIEVFETVEVARTL.

Residues 115-236 (EAEAQAKAEA…EAERYSDHHI (122 aa)) are compositionally biased toward basic and acidic residues. Positions 115-293 (EAEAQAKAEA…RNRSTAPESM (179 aa)) are disordered. Over residues 257 to 270 (GRRARNKNTAKTKR) the composition is skewed to basic residues. A compositionally biased stretch (basic and acidic residues) spans 271–280 (GGKDARDGRE). Residues 389–558 (PRAPVVTIMG…LLQAEVLELK (170 aa)) form the tr-type G domain. Residues 398–405 (GHVDHGKT) form a G1 region. 398–405 (GHVDHGKT) contributes to the GTP binding site. A G2 region spans residues 423–427 (GITQH). Residues 444–447 (DTPG) form a G3 region. Residues 444–448 (DTPGH) and 498–501 (NKMD) contribute to the GTP site. The G4 stretch occupies residues 498–501 (NKMD). A G5 region spans residues 534-536 (SAK).

The protein belongs to the TRAFAC class translation factor GTPase superfamily. Classic translation factor GTPase family. IF-2 subfamily.

The protein resides in the cytoplasm. In terms of biological role, one of the essential components for the initiation of protein synthesis. Protects formylmethionyl-tRNA from spontaneous hydrolysis and promotes its binding to the 30S ribosomal subunits. Also involved in the hydrolysis of GTP during the formation of the 70S ribosomal complex. This chain is Translation initiation factor IF-2, found in Shewanella sp. (strain ANA-3).